The following is a 249-amino-acid chain: 1-(5-phosphoribosyl)-5-[(5-phosphoribosylamino)methylideneamino] imidazole-4-carboxamide isomerase (249 aa).

Residue D8 is the Proton acceptor of the active site. Catalysis depends on D131, which acts as the Proton donor.

This sequence belongs to the HisA/HisF family.

It is found in the cytoplasm. The catalysed reaction is 1-(5-phospho-beta-D-ribosyl)-5-[(5-phospho-beta-D-ribosylamino)methylideneamino]imidazole-4-carboxamide = 5-[(5-phospho-1-deoxy-D-ribulos-1-ylimino)methylamino]-1-(5-phospho-beta-D-ribosyl)imidazole-4-carboxamide. The protein operates within amino-acid biosynthesis; L-histidine biosynthesis; L-histidine from 5-phospho-alpha-D-ribose 1-diphosphate: step 4/9. This chain is 1-(5-phosphoribosyl)-5-[(5-phosphoribosylamino)methylideneamino] imidazole-4-carboxamide isomerase, found in Leptothrix cholodnii (strain ATCC 51168 / LMG 8142 / SP-6) (Leptothrix discophora (strain SP-6)).